A 388-amino-acid polypeptide reads, in one-letter code: Plasminogen-binding group A streptococcal M-like protein PAM (388 aa).

The signal sequence occupies residues 1–29 (RKLKTGTASVAVALTVVGAGLASQTEVKA). Residues 85–113 (VEKLTADAELQRLKNERHEEAELERLKSE) are able to bind plasminogen. One copy of the A-1 repeat lies at 91–103 (DAELQRLKNERHE). The 2 X approximate tandem repeats, type a stretch occupies residues 91–116 (DAELQRLKNERHEEAELERLKSERHD). Composition is skewed to basic and acidic residues over residues 95-137 (QRLK…KQEH), 145-168 (INEK…EKQI), 176-189 (LRRD…AKKQ), 218-231 (LRRD…AKKQ), and 260-269 (LRRDLDASRE). 3 disordered regions span residues 95-189 (QRLK…AKKQ), 204-231 (VKEE…AKKQ), and 248-269 (EEKQ…ASRE). One copy of the A-2 repeat lies at 104–116 (EAELERLKSERHD). One copy of the B-1 repeat lies at 147–153 (EKEAEAK). A 2 X tandem repeats, type b region spans residues 147–161 (EKEAEAKEKEAEQKK). The stretch at 154-159 (EKEAEQ) is one B-2 repeat. C repeat units lie at residues 160–194 (KKLK…EKDL), 202–236 (DKVK…EKGL), and 244–278 (DKVK…EKAL). 4 D repeats span residues 311-316 (AKLEAE), 317-322 (AKALKE), 325-330 (AKQAEE), and 332-337 (AKLRAE). Residues 331 to 340 (LAKLRAEKAS) are compositionally biased toward basic and acidic residues. Residues 331 to 388 (LAKLRAEKASDSQTPDAKPGNKAVPGKGQAPQAGTKPNQNKAPMKETKRQLPSTGETT) form a disordered region. The LPXTG sorting signal signature appears at 381–385 (LPSTG). At Thr384 the chain carries Pentaglycyl murein peptidoglycan amidated threonine. Positions 385 to 388 (GETT) are cleaved as a propeptide — removed by sortase.

This sequence belongs to the M protein family.

It localises to the secreted. The protein resides in the cell wall. Its function is as follows. Binds to human plasminogen (and plasmin) via its kringle repeats. Also binds to albumin, immunoglobulin G and fibrinogen. Could provide the bacteria with a mechanism for invasion, as streptococcal-bound plasmin could permit tissue penetration. The sequence is that of Plasminogen-binding group A streptococcal M-like protein PAM (pam) from Streptococcus pyogenes.